The chain runs to 250 residues: Hydroxyethylthiazole kinase (250 aa).

Met-39 lines the substrate pocket. ATP-binding residues include Arg-114 and Thr-159. Gly-186 provides a ligand contact to substrate.

This sequence belongs to the Thz kinase family. The cofactor is Mg(2+).

The enzyme catalyses 5-(2-hydroxyethyl)-4-methylthiazole + ATP = 4-methyl-5-(2-phosphooxyethyl)-thiazole + ADP + H(+). It functions in the pathway cofactor biosynthesis; thiamine diphosphate biosynthesis; 4-methyl-5-(2-phosphoethyl)-thiazole from 5-(2-hydroxyethyl)-4-methylthiazole: step 1/1. Functionally, catalyzes the phosphorylation of the hydroxyl group of 4-methyl-5-beta-hydroxyethylthiazole (THZ). In Lactococcus lactis subsp. cremoris (strain SK11), this protein is Hydroxyethylthiazole kinase.